The sequence spans 354 residues: Probable disease resistance protein At5g45490 (354 aa).

Residues 33–53 adopt a coiled-coil conformation; the sequence is AKGNLEKKRDDNEEEERLKTE. Residues 45–122 enclose the NB-ARC domain; it reads EEEERLKTES…VYAPRVWVSM (78 aa). An ATP-binding site is contributed by 91-98; it reads GEYGVGKT. Positions 328-354 are disordered; that stretch reads DDEVGPVGSTHGQTDSSNRQPANQASS. The span at 337–354 shows a compositional bias: polar residues; the sequence is THGQTDSSNRQPANQASS.

Its function is as follows. Possible disease resistance protein. In Arabidopsis thaliana (Mouse-ear cress), this protein is Probable disease resistance protein At5g45490.